Reading from the N-terminus, the 727-residue chain is Glycerol-3-phosphate dehydrogenase, mitochondrial (727 aa).

The N-terminal 42 residues, 1–42, are a transit peptide targeting the mitochondrion; that stretch reads MAFQKAVKRTVLVCGGALATVLGLSQCSHYRRKQVNLACLKA. 71 to 99 contributes to the FAD binding site; it reads DILVIGGGATGSGCALDAVTRGLKTALVE. Residue Tyr-601 is modified to Phosphotyrosine. EF-hand domains follow at residues 623–658 and 659–694; these read SDIERYTKRFHKFDADEKGFITIVDVQRVLENINVK and IDENTLHEILSEVDLNKNGQVELNEFLQLMSAIQKG. The Ca(2+) site is built by Asp-672, Asn-674, Asn-676, Gln-678, and Glu-683.

The protein belongs to the FAD-dependent glycerol-3-phosphate dehydrogenase family. Requires FAD as cofactor.

It is found in the mitochondrion. The enzyme catalyses a quinone + sn-glycerol 3-phosphate = dihydroxyacetone phosphate + a quinol. It functions in the pathway polyol metabolism; glycerol degradation via glycerol kinase pathway; glycerone phosphate from sn-glycerol 3-phosphate (aerobic route): step 1/1. Calcium-binding enhance the activity of the enzyme. Its function is as follows. Calcium-responsive mitochondrial glycerol-3-phosphate dehydrogenase which seems to be a key component of the pancreatic beta-cell glucose-sensing device. The protein is Glycerol-3-phosphate dehydrogenase, mitochondrial (GPD2) of Mesocricetus auratus (Golden hamster).